Here is a 357-residue protein sequence, read N- to C-terminus: Glucose-6-phosphatase catalytic subunit 1 (357 aa).

Residues 1–28 (MEERMNVLHDFGIQSTRYLQVNYEDSQD) are Lumenal-facing. Residues 29-49 (WFVLVSVIADLRNAFYVLFPI) form a helical membrane-spanning segment. Topologically, residues 50 to 60 (WFHIQETVGIN) are cytoplasmic. The helical transmembrane segment at 61-81 (LLWVAVVGDWFNLVFKWILFG) threads the bilayer. At 82–117 (QRPYWWVLDTDYYSNSSVPLIKQFPVTCETGPGSPS) the chain is on the lumenal side. Arg83 contacts substrate. N-linked (GlcNAc...) asparagine glycosylation occurs at Asn96. A helical membrane pass occupies residues 118–138 (GHAMGTAGVYYVMVTSTLAIF). Catalysis depends on His119, which acts as the Proton donor. At 139–147 (RGKKKSTYG) the chain is on the cytoplasmic side. The helical transmembrane segment at 148–168 (FRCLNVVLWLGYWAVQLNVCL) threads the bilayer. Residues 169–170 (SR) lie on the Lumenal side of the membrane. Arg170 serves as a coordination point for substrate. The helical transmembrane segment at 171–191 (IYLAAHFPHQVVAGVLSGIAV) threads the bilayer. His176 functions as the Nucleophile in the catalytic mechanism. Residues 192–211 (AETFSHIRGIYNASLQRYCL) are Cytoplasmic-facing. Residues 212 to 232 (ITFFLFGFALGFYLLLKGLGV) traverse the membrane as a helical segment. At 233–254 (DLLWTLEKAKRWCERPEWVHLD) the chain is on the lumenal side. The chain crosses the membrane as a helical span at residues 255–275 (TTPFASLFKNLGTLLGLGLAL). The Cytoplasmic segment spans residues 276–291 (NSSMYRKSCKGELRKS). Residues 292–312 (LPFRLACIVASLGLLHLFDSL) traverse the membrane as a helical segment. The Lumenal portion of the chain corresponds to 313–320 (KPPSQIES). Residues 321–341 (IFYILSFCKSATVPFASVSLI) traverse the membrane as a helical segment. Residues 342–357 (PYCLARLLGQTHKKSL) lie on the Cytoplasmic side of the membrane. The Prevents secretion from ER signature appears at 354-357 (KKSL).

It belongs to the glucose-6-phosphatase family.

It localises to the endoplasmic reticulum membrane. The enzyme catalyses D-glucose 6-phosphate + H2O = D-glucose + phosphate. Its pathway is carbohydrate biosynthesis; gluconeogenesis. Functionally, hydrolyzes glucose-6-phosphate to glucose in the endoplasmic reticulum. Forms with the glucose-6-phosphate transporter (SLC37A4/G6PT) the complex responsible for glucose production in the terminal step of glycogenolysis and gluconeogenesis. Hence, it is the key enzyme in homeostatic regulation of blood glucose levels. This Rattus norvegicus (Rat) protein is Glucose-6-phosphatase catalytic subunit 1 (G6pc1).